The following is a 474-amino-acid chain: Protein IFIT1 homolog B (474 aa).

10 TPR repeats span residues Val52–Glu85, Leu95–Phe128, Val141–Asn174, Ala182–Asp216, Tyr218–Gln250, Ala251–Ser284, Ala305–Phe339, Glu340–Glu373, Gln378–Ser412, and Val437–Leu470.

The protein belongs to the IFIT family.

In terms of biological role, IFIT1B is likely non-functional, lacking the critical antiviral role of IFIT1. Unlike IFIT1, which is essential in the innate immune response as part of an interferon-dependent multiprotein complex, IFIT1B does not prevent the translation of viral RNAs that lack host-specific 2'-O-methylation at their 5' cap. Consequently, it probably cannot inhibit their translation by competing with the host translation machinery. The chain is Protein IFIT1 homolog B from Homo sapiens (Human).